Consider the following 251-residue polypeptide: Triosephosphate isomerase (251 aa).

A substrate-binding site is contributed by 9-11 (NWK). The active-site Electrophile is the His94. Residue Glu166 is the Proton acceptor of the active site. Residues Gly172, Ser211, and 232-233 (GG) each bind substrate.

The protein belongs to the triosephosphate isomerase family. In terms of assembly, homodimer.

The protein localises to the cytoplasm. The enzyme catalyses D-glyceraldehyde 3-phosphate = dihydroxyacetone phosphate. It functions in the pathway carbohydrate biosynthesis; gluconeogenesis. The protein operates within carbohydrate degradation; glycolysis; D-glyceraldehyde 3-phosphate from glycerone phosphate: step 1/1. In terms of biological role, involved in the gluconeogenesis. Catalyzes stereospecifically the conversion of dihydroxyacetone phosphate (DHAP) to D-glyceraldehyde-3-phosphate (G3P). This Xanthomonas campestris pv. campestris (strain 8004) protein is Triosephosphate isomerase.